The chain runs to 445 residues: C-terminal-binding protein 2 (445 aa).

R22 carries the post-translational modification Asymmetric dimethylarginine. NAD(+)-binding positions include S106, 186–191, D210, 243–249, 270–272, and D296; these read IGFGRT, CNLNEHN, and AAR. R272 is an active-site residue. Residue E301 is part of the active site. The active-site Proton donor is H321. NAD(+) is bound at residue 321-324; it reads HTAW. Residues 414-445 form a disordered region; the sequence is THNLPTVAHPSQAPSPNQPTKHGDNREHPNEQ. Phosphoserine; by HIPK2 is present on S428. The span at 434-445 shows a compositional bias: basic and acidic residues; that stretch reads KHGDNREHPNEQ.

Belongs to the D-isomer specific 2-hydroxyacid dehydrogenase family. As to quaternary structure, interacts with HIPK2, ZNF217 and PNN. Interacts with the transcription factors BKLF, delta EF1/AREB6/ZEB, EVI-1 and Friend of GATA (FOG) via the consensus motif P-X-[DNS]-L-[STVA]. Can form a complex with BKLF on a CACCC-box oligonucleotide. Can form homodimers or heterodimers of CTBP1 and CTBP2. Interacts with NRIP1 and WIZ. Interacts with PRDM16; represses white adipose tissue (WAT)-specific genes expression. Interacts with MCRIP1. Post-translationally, phosphorylation by HIPK2 on Ser-428 induces proteasomal degradation. In terms of tissue distribution, isoform 2 is specifically localized in synaptic ribbon (at protein level).

The protein resides in the nucleus. It is found in the synapse. Functionally, corepressor targeting diverse transcription regulators. Functions in brown adipose tissue (BAT) differentiation. Isoform 2 probably acts as a scaffold for specialized synapses. The polypeptide is C-terminal-binding protein 2 (Ctbp2) (Rattus norvegicus (Rat)).